A 442-amino-acid chain; its full sequence is tRNA modification GTPase MnmE (442 aa).

Residues Arg27, Glu84, and Lys124 each contribute to the (6S)-5-formyl-5,6,7,8-tetrahydrofolate site. A TrmE-type G domain is found at 221–366; it reads GLHVVIVGAP…LLDALQAFAE (146 aa). GTP contacts are provided by residues 231–236, 250–256, and 275–278; these read NAGKSS, SEEAGTT, and DTAG. Residues Ser235 and Thr256 each coordinate Mg(2+). Residue Lys442 coordinates (6S)-5-formyl-5,6,7,8-tetrahydrofolate.

It belongs to the TRAFAC class TrmE-Era-EngA-EngB-Septin-like GTPase superfamily. TrmE GTPase family. Homodimer. Heterotetramer of two MnmE and two MnmG subunits. The cofactor is K(+).

The protein resides in the cytoplasm. Its function is as follows. Exhibits a very high intrinsic GTPase hydrolysis rate. Involved in the addition of a carboxymethylaminomethyl (cmnm) group at the wobble position (U34) of certain tRNAs, forming tRNA-cmnm(5)s(2)U34. This chain is tRNA modification GTPase MnmE, found in Brucella ovis (strain ATCC 25840 / 63/290 / NCTC 10512).